Here is a 105-residue protein sequence, read N- to C-terminus: MIVTTTNTIEGKEIEEYLGIVAGEVILGANVVRDFLASITDIIGGRSGTYESKLAEGREMAIKEMVNKARSLGANAVIGVDLDFETLRDGMMMCIATGTAVRLKS.

Belongs to the UPF0145 family.

The sequence is that of UPF0145 protein GK1405 from Geobacillus kaustophilus (strain HTA426).